A 272-amino-acid chain; its full sequence is ATP synthase subunit a (272 aa).

The next 6 membrane-spanning stretches (helical) occupy residues 41 to 61 (VLNI…LSIF), 110 to 130 (FVWV…FPFI), 143 to 165 (VPSA…ILFY), 188 to 208 (VFFI…PISL), 222 to 242 (IFIL…NVPW), and 243 to 263 (AIFH…LTIV).

This sequence belongs to the ATPase A chain family. F-type ATPases have 2 components, CF(1) - the catalytic core - and CF(0) - the membrane proton channel. CF(1) has five subunits: alpha(3), beta(3), gamma(1), delta(1), epsilon(1). CF(0) has three main subunits: a(1), b(2) and c(9-12). The alpha and beta chains form an alternating ring which encloses part of the gamma chain. CF(1) is attached to CF(0) by a central stalk formed by the gamma and epsilon chains, while a peripheral stalk is formed by the delta and b chains.

It is found in the cell membrane. Functionally, key component of the proton channel; it plays a direct role in the translocation of protons across the membrane. This is ATP synthase subunit a from Buchnera aphidicola subsp. Schizaphis graminum (strain Sg).